Consider the following 192-residue polypeptide: Fe/S biogenesis protein NfuA (192 aa).

[4Fe-4S] cluster contacts are provided by C149 and C152.

This sequence belongs to the NfuA family. In terms of assembly, homodimer. It depends on [4Fe-4S] cluster as a cofactor.

In terms of biological role, involved in iron-sulfur cluster biogenesis. Binds a 4Fe-4S cluster, can transfer this cluster to apoproteins, and thereby intervenes in the maturation of Fe/S proteins. Could also act as a scaffold/chaperone for damaged Fe/S proteins. The chain is Fe/S biogenesis protein NfuA from Proteus mirabilis (strain HI4320).